The sequence spans 458 residues: UDP-N-acetylmuramate--L-alanine ligase (458 aa).

112-118 (GTHGKTT) is a binding site for ATP.

It belongs to the MurCDEF family.

Its subcellular location is the cytoplasm. It catalyses the reaction UDP-N-acetyl-alpha-D-muramate + L-alanine + ATP = UDP-N-acetyl-alpha-D-muramoyl-L-alanine + ADP + phosphate + H(+). It functions in the pathway cell wall biogenesis; peptidoglycan biosynthesis. Its function is as follows. Cell wall formation. This Geotalea uraniireducens (strain Rf4) (Geobacter uraniireducens) protein is UDP-N-acetylmuramate--L-alanine ligase.